The primary structure comprises 195 residues: Imidazoleglycerol-phosphate dehydratase (195 aa).

It belongs to the imidazoleglycerol-phosphate dehydratase family.

It is found in the cytoplasm. The catalysed reaction is D-erythro-1-(imidazol-4-yl)glycerol 3-phosphate = 3-(imidazol-4-yl)-2-oxopropyl phosphate + H2O. The protein operates within amino-acid biosynthesis; L-histidine biosynthesis; L-histidine from 5-phospho-alpha-D-ribose 1-diphosphate: step 6/9. This is Imidazoleglycerol-phosphate dehydratase from Geobacillus kaustophilus (strain HTA426).